A 282-amino-acid polypeptide reads, in one-letter code: uncharacterized protein (282 aa).

Positions 5 to 140 (DELIKLHEEH…SFQPYTKKLD (136 aa)) constitute an N-acetyltransferase domain.

It belongs to the acetyltransferase family.

This is an uncharacterized protein from Bacillus subtilis (strain 168).